The primary structure comprises 157 residues: ATP synthase subunit b (157 aa).

The helical transmembrane segment at 7-27 (LIAQLVVFFILAWFTMKFVWP) threads the bilayer.

Belongs to the ATPase B chain family. F-type ATPases have 2 components, F(1) - the catalytic core - and F(0) - the membrane proton channel. F(1) has five subunits: alpha(3), beta(3), gamma(1), delta(1), epsilon(1). F(0) has three main subunits: a(1), b(2) and c(10-14). The alpha and beta chains form an alternating ring which encloses part of the gamma chain. F(1) is attached to F(0) by a central stalk formed by the gamma and epsilon chains, while a peripheral stalk is formed by the delta and b chains.

Its subcellular location is the cell inner membrane. Its function is as follows. F(1)F(0) ATP synthase produces ATP from ADP in the presence of a proton or sodium gradient. F-type ATPases consist of two structural domains, F(1) containing the extramembraneous catalytic core and F(0) containing the membrane proton channel, linked together by a central stalk and a peripheral stalk. During catalysis, ATP synthesis in the catalytic domain of F(1) is coupled via a rotary mechanism of the central stalk subunits to proton translocation. Functionally, component of the F(0) channel, it forms part of the peripheral stalk, linking F(1) to F(0). In Azoarcus sp. (strain BH72), this protein is ATP synthase subunit b.